Consider the following 216-residue polypeptide: Phosphoribosylaminoimidazole-succinocarboxamide synthase (216 aa).

The protein belongs to the SAICAR synthetase family.

The enzyme catalyses 5-amino-1-(5-phospho-D-ribosyl)imidazole-4-carboxylate + L-aspartate + ATP = (2S)-2-[5-amino-1-(5-phospho-beta-D-ribosyl)imidazole-4-carboxamido]succinate + ADP + phosphate + 2 H(+). It functions in the pathway purine metabolism; IMP biosynthesis via de novo pathway; 5-amino-1-(5-phospho-D-ribosyl)imidazole-4-carboxamide from 5-amino-1-(5-phospho-D-ribosyl)imidazole-4-carboxylate: step 1/2. In Aquifex aeolicus (strain VF5), this protein is Phosphoribosylaminoimidazole-succinocarboxamide synthase (purC).